A 451-amino-acid polypeptide reads, in one-letter code: UPF0210 protein NMB1652 (451 aa).

This sequence belongs to the UPF0210 family. As to quaternary structure, homodimer.

This Neisseria meningitidis serogroup B (strain ATCC BAA-335 / MC58) protein is UPF0210 protein NMB1652.